Consider the following 127-residue polypeptide: MDATTTAKRKRPAASDIADDAPTTVDEVSDAEVEEFYAILRRMRDATRRLGARPPPPRAPAWRPSFSWEDFADAPPKQAPPPPQQPADHERVAENATPPRRPAPGLDLNVEPPSDAPATPRSARAPA.

2 disordered regions span residues 1–28 (MDATTTAKRKRPAASDIADDAPTTVDEV) and 47–127 (TRRL…RAPA). Over residues 112-127 (PPSDAPATPRSARAPA) the composition is skewed to low complexity.

It belongs to the NPR1-interactor family. Interacts with NPR1/NH1. Interacts with NPR3/NH3.

It localises to the nucleus. Its function is as follows. Acts as a negative regulator of disease resistance. Acts on basal resistance, age-related resistance and resistance mediated by the LRR receptor kinase XA21. Plants over-expressing NRR display enhanced susceptibility to the bacterial blight Xanthomonas oryzae pv. oryzae (Xoo). Binds to and represses NPR1/NH1-mediated transcriptional activation of LG2 in vitro. This Oryza sativa subsp. japonica (Rice) protein is Protein NEGATIVE REGULATOR OF RESISTANCE.